We begin with the raw amino-acid sequence, 925 residues long: Serine/threonine-protein phosphatase 1 regulatory subunit 10 (925 aa).

An interaction with TOX4 region spans residues 1 to 348 (MGSGPIDPKE…EPAPPSEAMD (348 aa)). A TFIIS N-terminal domain is found at 73 to 147 (KLLNNWLTYS…SDWMAVIRSQ (75 aa)). The disordered stretch occupies residues 147–211 (QSSTQPAEKD…APSHAKFRST (65 aa)). 2 stretches are compositionally biased toward basic and acidic residues: residues 153 to 166 (AEKDKKKRKEEGKS) and 174 to 196 (PLTEVKAETRAEEAPEKKREKPK). Residues Lys179 and Lys262 each participate in a glycyl lysine isopeptide (Lys-Gly) (interchain with G-Cter in SUMO2) cross-link. Disordered stretches follow at residues 304–398 (KIKK…KRKT), 536–555 (TLEPGGAGGSPDGAGGSKLP), and 587–890 (SIMG…HGGD). Ser313 is subject to Phosphoserine. Residues 325–336 (KTSTEPSTAKPS) show a composition bias toward low complexity. Residues 357-433 (PPVEVPELMD…NKIKDFGEAA (77 aa)) form a necessary for interaction with PPP1CA region. Residue Ser382 is modified to Phosphoserine. Positions 393–408 (GRKRKTVTWPEEGKLR) are necessary for interaction with PPP1CC. Residues 394-423 (RKRKTVTWPEEGKLREYFYFELDETERVNV) carry the PP1-binding motif motif. Thr398 carries the post-translational modification Phosphothreonine; by PKA. The interaction with WDR82 stretch occupies residues 418–619 (TERVNVNKIK…IKQMLVPHGL (202 aa)). Residues 540-551 (GGAGGSPDGAGG) show a composition bias toward gly residues. Phosphoserine occurs at positions 545 and 591. Residues 596-611 (PSEELLKQPDYSDKIK) are compositionally biased toward basic and acidic residues. The span at 644 to 655 (PPGPGGPMPGPH) shows a compositional bias: pro residues. Over residues 656 to 665 (GGPGGPGGPV) the composition is skewed to gly residues. The residue at position 668 (Arg668) is an Omega-N-methylarginine. Residues 679 to 693 (GDPFWDGPGDPMRGG) are compositionally biased toward low complexity. Omega-N-methylarginine occurs at positions 696 and 741. 2 stretches are compositionally biased toward gly residues: residues 728 to 766 (ARGGRSGGGPPNGRGGPGGGMVGGGGHRPHEGPGGGMSS) and 775 to 829 (GPGG…AGGG). Basic and acidic residues-rich tracts occupy residues 846–871 (PHDVPGHRGHDHRGPPPHEHRGHDGP) and 879–890 (RGHDGGHNHGGD). A C3H1-type zinc finger spans residues 891 to 919 (MSKRPVCRHFMMKGNCRYENNCAFYHPGV).

Component of the PNUTS-PP1 complex (also named PTW/PP1 complex), composed of PPP1R10/PNUTS, TOX4, WDR82, and PPP1CA (or PPP1CB or PPP1CC). Post-translationally, phosphorylated on Ser-398 by PKA within the region necessary for interaction with PPP1CA.

Its subcellular location is the nucleus. It localises to the chromosome. Functionally, substrate-recognition component of the PNUTS-PP1 protein phosphatase complex, a protein phosphatase 1 (PP1) complex that promotes RNA polymerase II transcription pause-release, allowing transcription elongation. Promoter-proximal pausing by RNA polymerase II is a transcription halt following transcription initiation but prior to elongation, which acts as a checkpoint to control that transcripts are favorably configured for transcriptional elongation. The PNUTS-PP1 complex mediates the release of RNA polymerase II from promoter-proximal region of genes by catalyzing dephosphorylation of proteins involved in transcription, such as AFF4, CDK9, MEPCE, INTS12, NCBP1, POLR2M/GDOWN1 and SUPT6H. The PNUTS-PP1 complex also regulates RNA polymerase II transcription termination by mediating dephosphorylation of SUPT5H in termination zones downstream of poly(A) sites, thereby promoting deceleration of RNA polymerase II transcription. PNUTS-PP1 complex is also involved in the response to replication stress by mediating dephosphorylation of POLR2A at 'Ser-5' of the CTD, promoting RNA polymerase II degradation. The PNUTS-PP1 complex also plays a role in the control of chromatin structure and cell cycle progression during the transition from mitosis into interphase. PNUTS-PP1 complex mediates dephosphorylation of MYC, promoting MYC stability by preventing MYC ubiquitination by the SCF(FBXW7) complex. In addition to acts as a substrate-recognition component, PPP1R10/PNUTS also acts as a nuclear targeting subunit for the PNUTS-PP1 complex. In some context, PPP1R10/PNUTS also acts as an inhibitor of protein phosphatase 1 (PP1) activity by preventing access to substrates, such as RB. The chain is Serine/threonine-protein phosphatase 1 regulatory subunit 10 (PPP1R10) from Sus scrofa (Pig).